We begin with the raw amino-acid sequence, 98 residues long: MSGLTADLDAVAAAGGYDDTDAMVEEAVRELLRRRPELRLSLAVEKYQSGAVSLNRAAELAGVSVEAFKDELADRGIDRDAGFLTDAQRDDHLQTFME.

This sequence belongs to the UPF0175 family.

In Halobacterium salinarum (strain ATCC 700922 / JCM 11081 / NRC-1) (Halobacterium halobium), this protein is UPF0175 protein VNG_0066H.